A 126-amino-acid polypeptide reads, in one-letter code: Bleomycin resistance protein (126 aa).

Residues 1–119 (MTDQATPNLP…DGTLLRLIQN (119 aa)) enclose the VOC domain.

It belongs to the bleomycin resistance protein family.

Functionally, binding protein with a strong affinity to the bleomycin family of antibiotics. Binds to CL990; an antimitotic-antibiotic compound. In Klebsiella pneumoniae, this protein is Bleomycin resistance protein (ble).